The following is a 132-amino-acid chain: Large ribosomal subunit protein uL24 (132 aa).

It belongs to the universal ribosomal protein uL24 family. As to quaternary structure, part of the 50S ribosomal subunit.

Functionally, one of two assembly initiator proteins, it binds directly to the 5'-end of the 23S rRNA, where it nucleates assembly of the 50S subunit. One of the proteins that surrounds the polypeptide exit tunnel on the outside of the subunit. This is Large ribosomal subunit protein uL24 from Synechococcus sp. (strain JA-3-3Ab) (Cyanobacteria bacterium Yellowstone A-Prime).